We begin with the raw amino-acid sequence, 759 residues long: DNA topoisomerase 3 (759 aa).

The Toprim domain maps to 3 to 147 (RALFVAEKND…RLDIFRARFS (145 aa)). The region spanning 165 to 590 (DEKTVAAVDC…EQIGKYRAIF (426 aa)) is the Topo IA-type catalytic domain. The O-(5'-phospho-DNA)-tyrosine intermediate role is filled by Y334. The disordered stretch occupies residues 609 to 715 (DKNNQAGGGP…KEQEEEEEVF (107 aa)). Over residues 614–639 (AGGGPGGPGGGGGPPRGPGGGGGGGP) the composition is skewed to gly residues. Pro residues predominate over residues 640 to 649 (TGPPAPPKPP). Zn(2+)-binding residues include C716, C718, C743, and C753. The GRF-type zinc-finger motif lies at 716-759 (CQCPEPMRAVTKVVQKEGPNKGKKFYTCSLPYTSSEKCNFFKWA).

The protein belongs to the type IA topoisomerase family. Component of the BTR double Holliday Junction dissolution complex composed of at least him-6, top-3, rmh-1 and rmif-2, which is involved in double strand break repair in the germline. May interact with rmh-1.

The protein localises to the nucleus. The catalysed reaction is ATP-independent breakage of single-stranded DNA, followed by passage and rejoining.. In terms of biological role, component of the BTR double Holliday Junction dissolution complex, which is involved in homologous recombination during meiotic double strand break in the germline. Releases the supercoiling and torsional tension of DNA introduced during the DNA replication and transcription by transiently cleaving and rejoining one strand of the DNA duplex. Introduces a single-strand break via transesterification at a target site in duplex DNA. The scissile phosphodiester is attacked by the catalytic tyrosine of the enzyme, resulting in the formation of a DNA-(5'-phosphotyrosyl)-enzyme intermediate and the expulsion of a 3'-OH DNA strand. The free DNA strand than undergoes passage around the unbroken strand thus removing DNA supercoils. Finally, in the religation step, the DNA 3'-OH attacks the covalent intermediate to expel the active-site tyrosine and restore the DNA phosphodiester backbone. In Caenorhabditis elegans, this protein is DNA topoisomerase 3.